A 479-amino-acid polypeptide reads, in one-letter code: Ribosomal RNA small subunit methyltransferase F (479 aa).

Residues 125–131 (AAAPGSK), glutamate 149, aspartate 176, and aspartate 194 contribute to the S-adenosyl-L-methionine site. Catalysis depends on cysteine 247, which acts as the Nucleophile.

The protein belongs to the class I-like SAM-binding methyltransferase superfamily. RsmB/NOP family.

It localises to the cytoplasm. It carries out the reaction cytidine(1407) in 16S rRNA + S-adenosyl-L-methionine = 5-methylcytidine(1407) in 16S rRNA + S-adenosyl-L-homocysteine + H(+). Functionally, specifically methylates the cytosine at position 1407 (m5C1407) of 16S rRNA. In Citrobacter koseri (strain ATCC BAA-895 / CDC 4225-83 / SGSC4696), this protein is Ribosomal RNA small subunit methyltransferase F.